A 402-amino-acid chain; its full sequence is Multidrug resistance protein MdtH (402 aa).

The Cytoplasmic portion of the chain corresponds to 1 to 12; it reads MSRVSQARNLGK. Residues 13–33 traverse the membrane as a helical segment; the sequence is YFLLIDNMLVVLVFFVVFPLI. Residues 34–98 lie on the Periplasmic side of the membrane; it reads SIRFVDQMGW…GFATMGIAHE (65 aa). Residues 99–116 traverse the membrane as a helical segment; it reads PWLLWFSCFLSGLGGTLF. At 117-138 the chain is on the cytoplasmic side; the sequence is DPPRSALVVKLIRPEQRGRFFS. The helical transmembrane segment at 139–159 threads the bilayer; it reads LLMMQDSAGAVIGALLGSWLL. The Periplasmic portion of the chain corresponds to 160–164; the sequence is QYDFR. Residues 165–185 traverse the membrane as a helical segment; it reads LVCATGAILFILCALFNAWLL. Topologically, residues 186-213 are cytoplasmic; it reads PAWKLSTVRTPVREGMRRVMSDKRFVTY. The helical transmembrane segment at 214–234 threads the bilayer; sequence VLTLAGYYMLAVQVMLMLPIM. Topologically, residues 235–243 are periplasmic; sequence VNDIAGSPA. The helical transmembrane segment at 244 to 264 threads the bilayer; that stretch reads AVKWMYAIEACLSLTLLYPIA. Over 265–276 the chain is Cytoplasmic; sequence RWSEKRFRLEHR. The helical transmembrane segment at 277–297 threads the bilayer; it reads LMAGLLVMSLSMIPIGMVGNL. The Periplasmic portion of the chain corresponds to 298–299; that stretch reads QQ. Residues 300-320 traverse the membrane as a helical segment; the sequence is LFTLICAFYIGSVIAEPARET. Residues 321–339 lie on the Cytoplasmic side of the membrane; it reads LSASLADARARGSYMGFSR. A helical transmembrane segment spans residues 340–360; sequence LGLAIGGAIGYIGGGWLFDMG. Residues 361 to 367 lie on the Periplasmic side of the membrane; sequence KALTQPE. The chain crosses the membrane as a helical span at residues 368–388; it reads LPWMMLGIIGFITFLALGWQF. The Cytoplasmic portion of the chain corresponds to 389–402; it reads SHKRTPRRMLEPGA.

Belongs to the major facilitator superfamily. DHA1 family. MdtH (TC 2.A.1.2.21) subfamily.

The protein resides in the cell inner membrane. This chain is Multidrug resistance protein MdtH, found in Salmonella choleraesuis (strain SC-B67).